The chain runs to 267 residues: Tryptophan synthase alpha chain (267 aa).

Residues glutamate 49 and aspartate 60 each act as proton acceptor in the active site.

Belongs to the TrpA family. Tetramer of two alpha and two beta chains.

It carries out the reaction (1S,2R)-1-C-(indol-3-yl)glycerol 3-phosphate + L-serine = D-glyceraldehyde 3-phosphate + L-tryptophan + H2O. Its pathway is amino-acid biosynthesis; L-tryptophan biosynthesis; L-tryptophan from chorismate: step 5/5. Its function is as follows. The alpha subunit is responsible for the aldol cleavage of indoleglycerol phosphate to indole and glyceraldehyde 3-phosphate. This is Tryptophan synthase alpha chain from Acinetobacter baumannii (strain AB307-0294).